Consider the following 244-residue polypeptide: HTH-type transcriptional repressor PhnF (244 aa).

Positions 8–74 (RILKHQVVRA…RGRTTVVARP (67 aa)) constitute an HTH gntR-type domain. The segment at residues 35 to 54 (EREIAEQFEVARETVRQALR) is a DNA-binding region (H-T-H motif).

The protein resides in the cytoplasm. Represses the phnDCE operon, involved in the uptake of phosphate, under conditions of phosphate availability in the cell. The polypeptide is HTH-type transcriptional repressor PhnF (phnF) (Mycolicibacterium smegmatis (strain ATCC 700084 / mc(2)155) (Mycobacterium smegmatis)).